The sequence spans 206 residues: Small ribosomal subunit protein uS4 (206 aa).

Residues 98 to 176 (RRLDNVVYRL…APKWLEANRE (79 aa)) form the S4 RNA-binding domain.

It belongs to the universal ribosomal protein uS4 family. In terms of assembly, part of the 30S ribosomal subunit. Contacts protein S5. The interaction surface between S4 and S5 is involved in control of translational fidelity.

One of the primary rRNA binding proteins, it binds directly to 16S rRNA where it nucleates assembly of the body of the 30S subunit. Functionally, with S5 and S12 plays an important role in translational accuracy. The protein is Small ribosomal subunit protein uS4 of Gloeobacter violaceus (strain ATCC 29082 / PCC 7421).